The primary structure comprises 193 residues: Translocation protein SEC72 (193 aa).

Component of the heterotetrameric Sec62/63complex composed of SEC62, SEC63, SEC71 and SEC72. The Sec62/63 complex associates with the Sec61 complex to form the Sec complex. May interact with protein YLR301W. Part of a complex consisting of KAR2, SEC63, SEC66 and SEC72.

The protein localises to the cytoplasm. Functionally, acts as a non-essential component of the Sec62/63 complex which is involved in SRP-independent post-translational translocation across the endoplasmic reticulum (ER) and functions together with the Sec61 complex and KAR2 in a channel-forming translocon complex. A cycle of assembly and disassembly of Sec62/63 complex from SEC61 may govern the activity of the translocon. SEC72 may be involved in signal peptide recognition for a defined subset of leader peptides, or may increase the efficiency of unusual or 'difficult' secretory precursors to the translocation pore, it may be that this protein binds charged leader peptides to the membrane until they engage the translocation apparatus. The sequence is that of Translocation protein SEC72 (SEC72) from Saccharomyces cerevisiae (strain ATCC 204508 / S288c) (Baker's yeast).